A 466-amino-acid polypeptide reads, in one-letter code: Glycylpeptide N-tetradecanoyltransferase (466 aa).

Positions 1-21 are disordered; sequence MDNENNKNTKNSQQDSSFSEG. Over residues 8–19 the composition is skewed to polar residues; it reads NTKNSQQDSSFS. The residue at position 17 (S17) is a Phosphoserine. Tetradecanoyl-CoA contacts are provided by residues 51–54, 185–187, and 193–197; these read FKFW, LCI, and SKRLT. Catalysis depends on I466, which acts as the Proton acceptor; via carboxylate.

Belongs to the NMT family. As to quaternary structure, monomer.

The protein localises to the cytoplasm. It catalyses the reaction N-terminal glycyl-[protein] + tetradecanoyl-CoA = N-tetradecanoylglycyl-[protein] + CoA + H(+). Adds a myristoyl group to the N-terminal glycine residue of certain cellular proteins. This Schizosaccharomyces pombe (strain 972 / ATCC 24843) (Fission yeast) protein is Glycylpeptide N-tetradecanoyltransferase (nmt1).